Here is a 463-residue protein sequence, read N- to C-terminus: Retinoic acid receptor RXR-gamma (463 aa).

The segment at 1–138 (MYGNYSHFMK…TSPGSLVKHI (138 aa)) is modulating. The disordered stretch occupies residues 18-53 (SPGHTGSTSMSPSAALSTGKPMDSHPSYTDTPVSAP). Residues 21–33 (HTGSTSMSPSAAL) show a composition bias toward polar residues. A DNA-binding region (nuclear receptor) is located at residues 136–211 (KHICAICGDR…MGMKREAVQE (76 aa)). 2 consecutive NR C4-type zinc fingers follow at residues 139-159 (CAICGDRSSGKHYGVYSCEGC) and 175-199 (CRDNKDCLIDKRQRNRCQYCRYQKC). Residues 205–230 (KREAVQEERQRSRERAESEAECATSG) are hinge. Positions 231 to 459 (HEDMPVERIL…TFLMEMLETP (229 aa)) constitute an NR LBD domain.

This sequence belongs to the nuclear hormone receptor family. NR2 subfamily. As to quaternary structure, homodimer. Heterodimer with a RAR molecule. Binds DNA preferentially as a RAR/RXR heterodimer. Interacts with RARA. In terms of processing, acetylated by EP300. As to expression, expressed in aortic endothelial cells (at protein level).

The protein localises to the nucleus. Its subcellular location is the cytoplasm. Functionally, receptor for retinoic acid. Retinoic acid receptors bind as heterodimers to their target response elements in response to their ligands, all-trans or 9-cis retinoic acid, and regulate gene expression in various biological processes. The RAR/RXR heterodimers bind to the retinoic acid response elements (RARE) composed of tandem 5'-AGGTCA-3' sites known as DR1-DR5. The high affinity ligand for RXRs is 9-cis retinoic acid. The sequence is that of Retinoic acid receptor RXR-gamma (RXRG) from Homo sapiens (Human).